Reading from the N-terminus, the 285-residue chain is Acetyl-coenzyme A carboxylase carboxyl transferase subunit beta (285 aa).

The region spanning 29 to 285 is the CoA carboxyltransferase N-terminal domain; it reads IMTKCPKCKK…ILKIHQEVTK (257 aa). Positions 33, 36, 52, and 55 each coordinate Zn(2+). The segment at 33 to 55 adopts a C4-type zinc-finger fold; it reads CPKCKKIMYTKELAENLNVCFNC.

It belongs to the AccD/PCCB family. As to quaternary structure, acetyl-CoA carboxylase is a heterohexamer composed of biotin carboxyl carrier protein (AccB), biotin carboxylase (AccC) and two subunits each of ACCase subunit alpha (AccA) and ACCase subunit beta (AccD). The cofactor is Zn(2+).

Its subcellular location is the cytoplasm. The enzyme catalyses N(6)-carboxybiotinyl-L-lysyl-[protein] + acetyl-CoA = N(6)-biotinyl-L-lysyl-[protein] + malonyl-CoA. Its pathway is lipid metabolism; malonyl-CoA biosynthesis; malonyl-CoA from acetyl-CoA: step 1/1. Component of the acetyl coenzyme A carboxylase (ACC) complex. Biotin carboxylase (BC) catalyzes the carboxylation of biotin on its carrier protein (BCCP) and then the CO(2) group is transferred by the transcarboxylase to acetyl-CoA to form malonyl-CoA. This chain is Acetyl-coenzyme A carboxylase carboxyl transferase subunit beta, found in Staphylococcus aureus (strain Newman).